Reading from the N-terminus, the 474-residue chain is Bifunctional protein HldE (474 aa).

Positions 1–318 are ribokinase; the sequence is MKLSMPRFDQ…RAVQREQGSE (318 aa). 194–197 provides a ligand contact to ATP; it reads NLSE. D263 is an active-site residue. The cytidylyltransferase stretch occupies residues 343-474; it reads FTNGCFDILH…AIVEKIRQKG (132 aa).

In the N-terminal section; belongs to the carbohydrate kinase PfkB family. It in the C-terminal section; belongs to the cytidylyltransferase family. As to quaternary structure, homodimer.

It catalyses the reaction D-glycero-beta-D-manno-heptose 7-phosphate + ATP = D-glycero-beta-D-manno-heptose 1,7-bisphosphate + ADP + H(+). The catalysed reaction is D-glycero-beta-D-manno-heptose 1-phosphate + ATP + H(+) = ADP-D-glycero-beta-D-manno-heptose + diphosphate. Its pathway is nucleotide-sugar biosynthesis; ADP-L-glycero-beta-D-manno-heptose biosynthesis; ADP-L-glycero-beta-D-manno-heptose from D-glycero-beta-D-manno-heptose 7-phosphate: step 1/4. The protein operates within nucleotide-sugar biosynthesis; ADP-L-glycero-beta-D-manno-heptose biosynthesis; ADP-L-glycero-beta-D-manno-heptose from D-glycero-beta-D-manno-heptose 7-phosphate: step 3/4. Catalyzes the phosphorylation of D-glycero-D-manno-heptose 7-phosphate at the C-1 position to selectively form D-glycero-beta-D-manno-heptose-1,7-bisphosphate. Functionally, catalyzes the ADP transfer from ATP to D-glycero-beta-D-manno-heptose 1-phosphate, yielding ADP-D-glycero-beta-D-manno-heptose. The protein is Bifunctional protein HldE of Pseudomonas paraeruginosa (strain DSM 24068 / PA7) (Pseudomonas aeruginosa (strain PA7)).